Here is a 488-residue protein sequence, read N- to C-terminus: Proline--tRNA ligase (488 aa).

This sequence belongs to the class-II aminoacyl-tRNA synthetase family. ProS type 3 subfamily. In terms of assembly, homodimer.

Its subcellular location is the cytoplasm. The catalysed reaction is tRNA(Pro) + L-proline + ATP = L-prolyl-tRNA(Pro) + AMP + diphosphate. Catalyzes the attachment of proline to tRNA(Pro) in a two-step reaction: proline is first activated by ATP to form Pro-AMP and then transferred to the acceptor end of tRNA(Pro). The polypeptide is Proline--tRNA ligase (Symbiobacterium thermophilum (strain DSM 24528 / JCM 14929 / IAM 14863 / T)).